We begin with the raw amino-acid sequence, 270 residues long: 26S proteasome regulatory subunit rpn12 (270 aa).

A PCI domain is found at 65 to 237 (CDIESFARYA…LETEDGMLID (173 aa)).

The protein belongs to the proteasome subunit S14 family.

Acts as a regulatory subunit of the 26S proteasome which is involved in the ATP-dependent degradation of ubiquitinated proteins. The polypeptide is 26S proteasome regulatory subunit rpn12 (rpn12) (Schizosaccharomyces pombe (strain 972 / ATCC 24843) (Fission yeast)).